The sequence spans 288 residues: MSLSGASDKTSDSPDVFQIKIGFIGAGNMAFGVAQGIIASGKVPPSNIIISAPSMNNLPRFKEKGVSVTHSNHEVVGGSRLIFLAVKPHIIPQVLKEISQEVTKEHIIVSMAAGITIATLEELLPAGTHVIRIMPNLPCMLLEGALLLSCGSHAGEQEETLLKTLLGPCGLVEFGPESWIDAHVGLSGSGVAFVYVFAEALADGAVKMGMPSTLARRIAAQTILGAGVLLRDSGKLPAELKAEVCTPGGTTIHGIHALEKGGFRAAAIGAVEAASERARELGNKQKKN.

The protein belongs to the pyrroline-5-carboxylate reductase family. As to quaternary structure, homodecamer; composed of 5 homodimers.

Its subcellular location is the cytoplasm. It catalyses the reaction L-proline + NADP(+) = (S)-1-pyrroline-5-carboxylate + NADPH + 2 H(+). It carries out the reaction L-proline + NAD(+) = (S)-1-pyrroline-5-carboxylate + NADH + 2 H(+). Its pathway is amino-acid biosynthesis; L-proline biosynthesis; L-proline from L-glutamate 5-semialdehyde: step 1/1. Functionally, oxidoreductase that catalyzes the last step in proline biosynthesis, which corresponds to the reduction of pyrroline-5-carboxylate (P5C) to L-proline using NAD(P)H. Proline is synthesized from either glutamate or ornithine; both are converted to P5C, and then to proline via pyrroline-5-carboxylate reductases (PYCRs). PYCR3 is exclusively linked to the biosynthesis of proline from ornithine. The protein is Pyrroline-5-carboxylate reductase 3 of Danio rerio (Zebrafish).